A 445-amino-acid chain; its full sequence is Putative aldehyde dehydrogenase AldX (445 aa).

Catalysis depends on residues glutamate 214 and cysteine 248.

The protein belongs to the aldehyde dehydrogenase family.

It carries out the reaction an aldehyde + NAD(+) + H2O = a carboxylate + NADH + 2 H(+). This is Putative aldehyde dehydrogenase AldX (aldX) from Bacillus subtilis (strain 168).